Consider the following 545-residue polypeptide: T-complex protein 1 subunit gamma (545 aa).

Met-1 is subject to N-acetylmethionine. Residues 1–24 (MMGHRPVLVLSQNTKRESGRKVQS) are disordered. Ser-11 is subject to Phosphoserine. Lys-15 is covalently cross-linked (Glycyl lysine isopeptide (Lys-Gly) (interchain with G-Cter in SUMO2)). Gly-42, Gly-94, Thr-95, Thr-96, Ser-97, Thr-162, and Lys-163 together coordinate ADP. The ATP site is built by Gly-42, Gly-94, Thr-95, and Thr-96. A Phosphoserine modification is found at Ser-170. Lys-222 is modified (N6-acetyllysine). Phosphoserine is present on residues Ser-243 and Ser-244. The residue at position 247 (Tyr-247) is a Phosphotyrosine. Residues Lys-248 and Lys-249 each participate in a glycyl lysine isopeptide (Lys-Gly) (interchain with G-Cter in SUMO2) cross-link. At Ser-252 the chain carries Phosphoserine. Cys-366 and Cys-372 are oxidised to a cystine. Residue Lys-381 forms a Glycyl lysine isopeptide (Lys-Gly) (interchain with G-Cter in SUMO2) linkage. Position 411 (Gly-411) interacts with ADP. ATP is bound at residue Gly-411. 2 positions are modified to phosphothreonine: Thr-430 and Thr-459. ADP contacts are provided by Gly-482, Glu-483, Glu-497, and Lys-502. An ATP-binding site is contributed by Gly-482. Position 497 (Glu-497) interacts with ATP. The interval 526–545 (HKKKGDDQSRQGGAPDAGQE) is disordered.

It belongs to the TCP-1 chaperonin family. In terms of assembly, component of the chaperonin-containing T-complex (TRiC), a hexadecamer composed of two identical back-to-back stacked rings enclosing a protein folding chamber. Each ring is made up of eight different subunits: TCP1/CCT1, CCT2, CCT3, CCT4, CCT5, CCT6A/CCT6, CCT7, CCT8. Interacts with PACRG. Interacts with DNAAF4. Interacts with DLEC1.

The protein localises to the cytoplasm. It catalyses the reaction ATP + H2O = ADP + phosphate + H(+). Component of the chaperonin-containing T-complex (TRiC), a molecular chaperone complex that assists the folding of actin, tubulin and other proteins upon ATP hydrolysis. The TRiC complex mediates the folding of WRAP53/TCAB1, thereby regulating telomere maintenance. As part of the TRiC complex may play a role in the assembly of BBSome, a complex involved in ciliogenesis regulating transports vesicles to the cilia. The protein is T-complex protein 1 subunit gamma (CCT3) of Macaca fascicularis (Crab-eating macaque).